Reading from the N-terminus, the 178-residue chain is Large ribosomal subunit protein uL6 (178 aa).

The protein belongs to the universal ribosomal protein uL6 family. As to quaternary structure, part of the 50S ribosomal subunit.

In terms of biological role, this protein binds to the 23S rRNA, and is important in its secondary structure. It is located near the subunit interface in the base of the L7/L12 stalk, and near the tRNA binding site of the peptidyltransferase center. The chain is Large ribosomal subunit protein uL6 from Gluconobacter oxydans (strain 621H) (Gluconobacter suboxydans).